The following is a 297-amino-acid chain: Formylmethanofuran--tetrahydromethanopterin formyltransferase (297 aa).

It belongs to the FTR family. In terms of assembly, homotetramer.

The protein localises to the cytoplasm. It carries out the reaction N-formylmethanofuran + 5,6,7,8-tetrahydromethanopterin + H(+) = N(5)-formyl-5,6,7,8-tetrahydromethanopterin + methanofuran. It participates in one-carbon metabolism; methanogenesis from CO(2); 5,10-methenyl-5,6,7,8-tetrahydromethanopterin from CO(2): step 2/3. In terms of biological role, catalyzes the reversible transfer of a formyl group from formylmethanofuran (formyl-MFR) to tetrahydromethanopterin (H(4)MPT) to produce 5-formyl tetrahydromethanopterin (5-formyl-H(4)MPT) and methanofuran (MFR). The polypeptide is Formylmethanofuran--tetrahydromethanopterin formyltransferase (Methanococcoides burtonii (strain DSM 6242 / NBRC 107633 / OCM 468 / ACE-M)).